Consider the following 25-residue polypeptide: Large ribosomal subunit protein uL30 (25 aa).

It belongs to the universal ribosomal protein uL30 family. Part of the 50S ribosomal subunit.

The chain is Large ribosomal subunit protein uL30 (rpmD) from Pseudomonas fluorescens biotype A.